We begin with the raw amino-acid sequence, 620 residues long: 1-deoxy-D-xylulose-5-phosphate synthase (620 aa).

Thiamine diphosphate is bound by residues His-80 and Gly-121 to Ser-123. Residue Asp-152 coordinates Mg(2+). Thiamine diphosphate contacts are provided by residues Gly-153–Ala-154, Asn-181, Tyr-288, and Glu-370. Position 181 (Asn-181) interacts with Mg(2+).

This sequence belongs to the transketolase family. DXPS subfamily. As to quaternary structure, homodimer. Mg(2+) is required as a cofactor. Requires thiamine diphosphate as cofactor.

It carries out the reaction D-glyceraldehyde 3-phosphate + pyruvate + H(+) = 1-deoxy-D-xylulose 5-phosphate + CO2. It participates in metabolic intermediate biosynthesis; 1-deoxy-D-xylulose 5-phosphate biosynthesis; 1-deoxy-D-xylulose 5-phosphate from D-glyceraldehyde 3-phosphate and pyruvate: step 1/1. Catalyzes the acyloin condensation reaction between C atoms 2 and 3 of pyruvate and glyceraldehyde 3-phosphate to yield 1-deoxy-D-xylulose-5-phosphate (DXP). This is 1-deoxy-D-xylulose-5-phosphate synthase from Photobacterium profundum (strain SS9).